Here is a 293-residue protein sequence, read N- to C-terminus: Fructose-bisphosphate aldolase (293 aa).

Serine 50 serves as a coordination point for D-glyceraldehyde 3-phosphate. Aspartate 85 (proton donor) is an active-site residue. Residues histidine 86, aspartate 106, glutamate 136, and histidine 178 each contribute to the Zn(2+) site. Dihydroxyacetone phosphate is bound at residue glycine 179. Residue histidine 208 coordinates Zn(2+). Residues 209 to 211 (GGS) and 230 to 233 (NVNT) contribute to the dihydroxyacetone phosphate site.

The protein belongs to the class II fructose-bisphosphate aldolase family. Zn(2+) is required as a cofactor.

It carries out the reaction beta-D-fructose 1,6-bisphosphate = D-glyceraldehyde 3-phosphate + dihydroxyacetone phosphate. It participates in carbohydrate degradation; glycolysis; D-glyceraldehyde 3-phosphate and glycerone phosphate from D-glucose: step 4/4. Functionally, catalyzes the aldol condensation of dihydroxyacetone phosphate (DHAP or glycerone-phosphate) with glyceraldehyde 3-phosphate (G3P) to form fructose 1,6-bisphosphate (FBP) in gluconeogenesis and the reverse reaction in glycolysis. This is Fructose-bisphosphate aldolase (fba) from Streptococcus pyogenes serotype M1.